We begin with the raw amino-acid sequence, 936 residues long: Protein translocase subunit SecA (936 aa).

Residues glutamine 87, 105-109 (GEGKT), and aspartate 515 contribute to the ATP site. Zn(2+) is bound by residues cysteine 920, cysteine 922, cysteine 931, and histidine 932.

Belongs to the SecA family. Monomer and homodimer. Part of the essential Sec protein translocation apparatus which comprises SecA, SecYEG and auxiliary proteins SecDF-YajC and YidC. The cofactor is Zn(2+).

It is found in the cell inner membrane. The protein localises to the cytoplasm. It carries out the reaction ATP + H2O + cellular proteinSide 1 = ADP + phosphate + cellular proteinSide 2.. Its function is as follows. Part of the Sec protein translocase complex. Interacts with the SecYEG preprotein conducting channel. Has a central role in coupling the hydrolysis of ATP to the transfer of proteins into and across the cell membrane, serving both as a receptor for the preprotein-SecB complex and as an ATP-driven molecular motor driving the stepwise translocation of polypeptide chains across the membrane. In Paraburkholderia xenovorans (strain LB400), this protein is Protein translocase subunit SecA.